Consider the following 92-residue polypeptide: Large ribosomal subunit protein bL28 (92 aa).

This sequence belongs to the bacterial ribosomal protein bL28 family.

The protein is Large ribosomal subunit protein bL28 of Borrelia hermsii (strain HS1 / DAH).